The chain runs to 91 residues: RNA-binding protein Hfq (91 aa).

Residues 9-68 (DPFLNALRRERVPVSIYLVNGIKLQGQVESFDQFVILLKNTVSQMVYKHAISTVVPSRPF) enclose the Sm domain. The disordered stretch occupies residues 66-91 (RPFNVGSHQGGSSNYNAQQDDSAGEQ). Positions 71–91 (GSHQGGSSNYNAQQDDSAGEQ) are enriched in polar residues.

This sequence belongs to the Hfq family. Homohexamer.

In terms of biological role, RNA chaperone that binds small regulatory RNA (sRNAs) and mRNAs to facilitate mRNA translational regulation in response to envelope stress, environmental stress and changes in metabolite concentrations. Also binds with high specificity to tRNAs. The polypeptide is RNA-binding protein Hfq (Shewanella amazonensis (strain ATCC BAA-1098 / SB2B)).